The primary structure comprises 250 residues: Ribosomal RNA small subunit methyltransferase J (250 aa).

Residues 96 to 97 (RD) and D168 each bind S-adenosyl-L-methionine.

This sequence belongs to the methyltransferase superfamily. RsmJ family.

Its subcellular location is the cytoplasm. It carries out the reaction guanosine(1516) in 16S rRNA + S-adenosyl-L-methionine = N(2)-methylguanosine(1516) in 16S rRNA + S-adenosyl-L-homocysteine + H(+). Its function is as follows. Specifically methylates the guanosine in position 1516 of 16S rRNA. The chain is Ribosomal RNA small subunit methyltransferase J from Neisseria meningitidis serogroup C (strain 053442).